Here is a 170-residue protein sequence, read N- to C-terminus: Cathelicidin antimicrobial peptide (170 aa).

The signal sequence occupies residues 1 to 30 (MKTQRDGPSLGRWSLVLLLLGLVMPLAIVA). Residues 31–131 (QVLSYQEAVL…DISCDKDNRR (101 aa)) constitute a propeptide, cathelin-like domain (CLD). 2 disulfide bridges follow: C86–C97 and C108–C125. Residues 150–162 (LKKIGQKIKDFLG) form an active core region.

This sequence belongs to the cathelicidin family. In terms of assembly, monomer, homodimer or homotrimer (in vitro). Oligomerizes as tetra- or hexamer in solution (in vitro). In terms of processing, proteolytically cleaved by proteinase PRTN3 into antibacterial peptide LL-37. Proteolytically cleaved by cathepsin CTSG and neutrophil elastase ELANE. Post-translationally, resistant to proteolytic degradation in solution, and when bound to both zwitterionic (mimicking mammalian membranes) and negatively charged membranes (mimicking bacterial membranes). After secretion onto the skin surface, the CAMP gene product is processed by a serine protease-dependent mechanism into multiple novel antimicrobial peptides distinct from and shorter than cathelicidin LL-37. These peptides show enhanced antimicrobial action, acquiring the ability to kill skin pathogens such as S.aureus, E.coli and C.albicans. These peptides have lost the ability to stimulate CXCL8/IL8 release from keratinocytes. The peptides act synergistically, killing bacteria at lower concentrations when present together, and maintain activity at increased salt condition.

The protein localises to the secreted. It is found in the vesicle. In terms of biological role, antimicrobial protein that is an integral component of the innate immune system. Binds to bacterial lipopolysaccharides (LPS). Acts via neutrophil N-formyl peptide receptors to enhance the release of CXCL2. Postsecretory processing generates multiple cathelicidin antimicrobial peptides with various lengths which act as a topical antimicrobial defense in sweat on skin. The unprocessed precursor form, cathelicidin antimicrobial peptide, inhibits the growth of Gram-negative E.coli and E.aerogenes with efficiencies comparable to that of the mature peptide LL-37 (in vitro). Antimicrobial peptide that is an integral component of the innate immune system. Binds to bacterial lipopolysaccharides (LPS). Causes membrane permeabilization by forming transmembrane pores (in vitro). Causes lysis of E.coli. Exhibits antimicrobial activity against Gram-negative bacteria such as P.aeruginosa, S.typhimurium, E.aerogenes, E.coli and P.syringae, Gram-positive bacteria such as L.monocytogenes, S.epidermidis, S.pyogenes and S.aureus, as well as vancomycin-resistant enterococci (in vitro). Exhibits antimicrobial activity against methicillin-resistant S.aureus, P.mirabilis, and C.albicans in low-salt media, but not in media containing 100 mM NaCl (in vitro). Forms chiral supramolecular assemblies with quinolone signal (PQS) molecules of P.aeruginosa, which may lead to interference of bacterial quorum signaling and perturbance of bacterial biofilm formation. May form supramolecular fiber-like assemblies on bacterial membranes. Induces cytokine and chemokine producation as well as TNF/TNFA and CSF2/GMCSF production in normal human keratinocytes. Exhibits hemolytic activity against red blood cells. Functionally, exhibits antimicrobial activity against E.coli and B.megaterium (in vitro). The chain is Cathelicidin antimicrobial peptide from Chlorocebus aethiops (Green monkey).